Consider the following 77-residue polypeptide: Small nuclear ribonucleoprotein G (77 aa).

In terms of domain architecture, Sm spans 2 to 77; sequence VSTPELKKYM…IISLEALDAI (76 aa).

The protein belongs to the snRNP Sm proteins family. Component of the Sm core complex, present in spliceosomal snRNP U1, U2, U4/U6 and U5. The core complex contains SMB1, SMD1, SMD2, SMD3, SME1, SMX3 and SMX2 (Sm proteins B, D1, D2, D3, E, F and G, respectively), and is probably a heptameric ring structure. SMX2 specifically interacts with SME1. Belongs to the CWC complex (or CEF1-associated complex), a spliceosome sub-complex reminiscent of a late-stage spliceosome composed of the U2, U5 and U6 snRNAs and at least BUD13, BUD31, BRR2, CDC40, CEF1, CLF1, CUS1, CWC2, CWC15, CWC21, CWC22, CWC23, CWC24, CWC25, CWC27, ECM2, HSH155, IST3, ISY1, LEA1, MSL1, NTC20, PRP8, PRP9, PRP11, PRP19, PRP21, PRP22, PRP45, PRP46, SLU7, SMB1, SMD1, SMD2, SMD3, SMX2, SMX3, SNT309, SNU114, SPP2, SYF1, SYF2, RSE1 and YJU2. Component of the U4/U6-U5 tri-snRNP complex composed of the U4, U6 and U5 snRNAs and at least PRP3, PRP4, PRP6, PRP8, PRP18, PRP31, PRP38, SNU13, SNU23, SNU66, SNU114, SPP381, SMB1, SMD1, SMD2, SMD3, SMX2, SMX3, LSM2, LSM3, LSM4, LSM5, LSM6, LSM7, LSM8, BRR2 and DIB1.

The protein localises to the nucleus. Its subcellular location is the cytoplasm. Its function is as follows. Plays a role in pre-mRNA splicing as a core component of the spliceosomal U1, U2, U4 and U5 small nuclear ribonucleoproteins (snRNPs), the building blocks of the spliceosome. The protein is Small nuclear ribonucleoprotein G (SMX2) of Saccharomyces cerevisiae (strain ATCC 204508 / S288c) (Baker's yeast).